Here is a 930-residue protein sequence, read N- to C-terminus: MSLISAAADVNDASSTTSAGSVRSSAVYRKDGKPLSQEALYRAQQKYGVFQSPARQTGSGLKDSKMASDVAANLANNNRTTIEAYKRVLDSNASRAATAVSSRSRSSSVTSNATVVTTSSKSTNAAVKALSSKPVEQPVAPKKSNMNMSKILVGAEAAAEKRIGIRMKPEKIVYVPSKESGKAAERSMSLTPEIMDKLKTKGDYEAEAEVEADPKKYASKAAFAVRDFDPNEATEKELLEREKKKQAYFGMLTSPQVLSLARANAQVKLDQIDKAAPGSLYKNEEFNKLAVALAQKNSTKRSEHHGKINMGGGLWLTQADVQNIAQGLITPVLDEVDSRALQQRAIDEDIKQRKIDFKEQNAAWIELQRNKLSNDKMYSRETRMRHKRETEGLHARTERKFQDLCASKDSEVAEMEKALQNAKDSYAALQKQMEEDLEKERLRVEAEVAALKKEQEEDLKAARVEQEQELKPYVDDVKAAEAEHERLTAERDSLNKEIEELRASIESHKVRIEELDNEISDSAAKHEEEEGKREELTKHKEEFDQEVSEKFTVIAQAAKEKAQKSSEEARLKQLEVDAMINERQSELNSTELELKKEKLSLLEAMRNVTELKGEDKLDENRVKALIGMTSEEFIAENNKSVNVSDDKFEPFNEHTASTKSIKHEEGVLGEGGAKTNSDELPVKDSAEKSSEHLNSTAEKSIEPAKASSPYPAKPSMVDAVLPKDFKPEVKPKAKPAHKTPQQGAAAGGEPASAKSGVKRSPSLKQKFMGIIKGDTKSQSKPAAAATPVHPPATVKKAAPKKAAASSEADTPAKVSPAKDTAKTEIQKIAQGGPAPAPEPEHKTAPAVDNATTKSVSTLQKPTNSGIDKSEIHKIAQGGPAPTSGHSNHTRTSVYENGDNSDDEDELPDSSEAGENGIGADKKGSLFKEVF.

Disordered regions lie at residues 1-34 (MSLI…DGKP), 98-143 (TAVS…APKK), 516-544 (DNEI…EEFD), and 637-930 (NNKS…KEVF). 2 stretches are compositionally biased toward low complexity: residues 13-27 (ASST…SSAV) and 98-129 (TAVS…AVKA). 2 stretches are compositionally biased toward basic and acidic residues: residues 523–542 (AAKH…HKEE) and 676–691 (NSDE…KSSE). Low complexity predominate over residues 703–715 (PAKASSPYPAKPS). Positions 721-731 (LPKDFKPEVKP) are enriched in basic and acidic residues. Composition is skewed to low complexity over residues 740-755 (PQQG…SAKS) and 781-804 (PAAA…KAAA). Composition is skewed to polar residues over residues 849-866 (NATT…NSGI) and 883-894 (SGHSNHTRTSVY). Positions 898–908 (DNSDDEDELPD) are enriched in acidic residues. The segment covering 919–930 (ADKKGSLFKEVF) has biased composition (basic and acidic residues).

Belongs to the EIS1 family.

It is found in the cytoplasmic granule. It localises to the cell membrane. In terms of biological role, required for normal formation of eisosomes, large cytoplasmic protein assemblies that localize to specialized domains on plasma membrane and mark the site of endocytosis. The protein is Eisosome protein 1 (EIS1) of Lachancea thermotolerans (strain ATCC 56472 / CBS 6340 / NRRL Y-8284) (Yeast).